Reading from the N-terminus, the 757-residue chain is RNA-directed RNA polymerase catalytic subunit (757 aa).

The interval 53-82 (GRWTTNTETGAPQLNPIDGPLPEDNEPSGY) is disordered. The segment covering 55 to 64 (WTTNTETGAP) has biased composition (polar residues). 2 short sequence motifs (nuclear localization signal) span residues 187–195 (RKRRVRDNM) and 203–216 (RTMG…NKRS). The segment at 249 to 256 (RGFVYFVE) is promoter-binding site. Positions 286–483 (VRKMMTNSQD…GINMSKKKSY (198 aa)) constitute a RdRp catalytic domain.

It belongs to the influenza viruses polymerase PB1 family. In terms of assembly, influenza RNA polymerase is composed of three subunits: PB1, PB2 and PA. Interacts (via N-terminus) with PA (via C-terminus). Interacts (via C-terminus) with PB2 (via N-terminus); this interaction is essential for transcription initiation. Interacts (via C-terminus) with human PKP2 (via N-terminus); the interaction competitively inhibits the interaction between the RNA polymerase subunits PB1 and PB2. Phosphorylated by host PRKCA.

Its subcellular location is the host nucleus. It localises to the host cytoplasm. The catalysed reaction is RNA(n) + a ribonucleoside 5'-triphosphate = RNA(n+1) + diphosphate. In terms of biological role, RNA-dependent RNA polymerase which is responsible for replication and transcription of virus RNA segments. The transcription of viral mRNAs occurs by a unique mechanism called cap-snatching. 5' methylated caps of cellular mRNAs are cleaved after 10-13 nucleotides by PA. In turn, these short capped RNAs are used as primers by PB1 for transcription of viral mRNAs. During virus replication, PB1 initiates RNA synthesis and copy vRNA into complementary RNA (cRNA) which in turn serves as a template for the production of more vRNAs. This Influenza A virus (strain A/Russia:St.Petersburg/8/2006 H1N1) protein is RNA-directed RNA polymerase catalytic subunit.